Consider the following 140-residue polypeptide: ATP synthase epsilon chain (140 aa).

It belongs to the ATPase epsilon chain family. In terms of assembly, F-type ATPases have 2 components, CF(1) - the catalytic core - and CF(0) - the membrane proton channel. CF(1) has five subunits: alpha(3), beta(3), gamma(1), delta(1), epsilon(1). CF(0) has three main subunits: a, b and c.

The protein localises to the cell inner membrane. Produces ATP from ADP in the presence of a proton gradient across the membrane. This Legionella pneumophila (strain Paris) protein is ATP synthase epsilon chain.